We begin with the raw amino-acid sequence, 591 residues long: NADH-quinone oxidoreductase subunit C/D (591 aa).

Residues 1–182 (MVTVVENIDP…TPYFLNTAKQ (182 aa)) are NADH dehydrogenase I subunit C. Residues 206-591 (DFMFLNIGPN…IDVVMADCDR (386 aa)) are NADH dehydrogenase I subunit D.

It in the N-terminal section; belongs to the complex I 30 kDa subunit family. In the C-terminal section; belongs to the complex I 49 kDa subunit family. As to quaternary structure, NDH-1 is composed of 13 different subunits. Subunits NuoB, CD, E, F, and G constitute the peripheral sector of the complex.

It is found in the cell inner membrane. It carries out the reaction a quinone + NADH + 5 H(+)(in) = a quinol + NAD(+) + 4 H(+)(out). Its function is as follows. NDH-1 shuttles electrons from NADH, via FMN and iron-sulfur (Fe-S) centers, to quinones in the respiratory chain. The immediate electron acceptor for the enzyme in this species is believed to be ubiquinone. Couples the redox reaction to proton translocation (for every two electrons transferred, four hydrogen ions are translocated across the cytoplasmic membrane), and thus conserves the redox energy in a proton gradient. This is NADH-quinone oxidoreductase subunit C/D from Psychrobacter arcticus (strain DSM 17307 / VKM B-2377 / 273-4).